The primary structure comprises 108 residues: Nucleoid-associated protein IL1848 (108 aa).

Disordered stretches follow at residues 1–26 (MFKG…AQEE) and 88–108 (KERM…KMPF). Positions 9–26 (MMKQAQQMQERMQQAQEE) are enriched in low complexity.

Belongs to the YbaB/EbfC family. As to quaternary structure, homodimer.

The protein resides in the cytoplasm. It is found in the nucleoid. Binds to DNA and alters its conformation. May be involved in regulation of gene expression, nucleoid organization and DNA protection. The protein is Nucleoid-associated protein IL1848 of Idiomarina loihiensis (strain ATCC BAA-735 / DSM 15497 / L2-TR).